The following is a 398-amino-acid chain: MTKKTVASLSKSDLSGKKVLMRADFNVPVDNGSITDDTRIRAALPTIQDLTEKGAKVILTSHFGRPKGKVNEKMRLTLVGERLSEVLGKEVKKCDDCIGDEVTSTVAEMKDGDVVLLENVRFYSGEEGNDPEFAKQLASVADLYVNDAFGTAHRAHASTEGVTKYLSPSVAGYLIEQELKFLQGAIDSPQKPLAAIIGGSKVSSKIGVIEALLDKCDKLLLGGGMIFTFYKARGLSVGKSLVEEDKIELAKSLEAKAKEKGVTMLLPTDVVVADKFDPEANTQTVSIEAIPDGWMGLDIGPESAKVFQDALADCKTVIWNGPMGVFEMEKFAKGTEAIAQTLADKQDAITIIGGGDSVAAVEQLGLGEKMSHISTGGGASLELLEGKKLPGIVALDDQ.

Substrate contacts are provided by residues Asp24–Asn26, Arg39, His62–Arg65, Arg121, and Arg154. Residues Lys205, Gly296, Glu327, and Gly354–Ser357 each bind ATP.

The protein belongs to the phosphoglycerate kinase family. Monomer.

The protein resides in the cytoplasm. The enzyme catalyses (2R)-3-phosphoglycerate + ATP = (2R)-3-phospho-glyceroyl phosphate + ADP. It functions in the pathway carbohydrate degradation; glycolysis; pyruvate from D-glyceraldehyde 3-phosphate: step 2/5. This is Phosphoglycerate kinase from Trichodesmium erythraeum (strain IMS101).